Here is a 670-residue protein sequence, read N- to C-terminus: MKLAVLFCFILLIVLQTDCERGTRRQRRRMHQRRLRKSSSFHLRANRQLEVQQTTAAPDARLPTANSDYSVEENIESLLSNLGVESSYSVLPGKKGYCFVKGMIMYNKAVWSPEPCTTCLCSNGRVLCDETECHPKACPYTIKPEGECCPICSDAEQESINKLHKQVPPPQMEMDQVAIKEALQSEEDEEIAEGHKEHKKETSVPTKIHGDGERTERKLRPEKEGRSAHQPLYHGRREEEESKEETEREGEEEEEEEEEEEEDAIRGDVFRMSSRVIPGTPRGRPRLPRSCSLSYRTISCVHADFTEIPPITAPEVTNLELVGNSIISIPDEAFNGLPNLERLDLSRNNITSSGIGPKAFKSLKKLMRLNMDGNNLVHIPSDLPSTLEELKINDNNLQAIDEKSLSDLNQLVTLELEGNNLSEINVDPLAFQSLESLSYLRLGRNKFRIIPQGLPASTEELYLENNQIEEITEICFNHTRKITMIILRYNKIEESRIAPLAWINQENLESIDLSYNKLYHVPSYLPKSLLHLVLIGNQIDRIPGYVFGHMQPGLEYLYLSFNRLSDDGVDLVSFYGAYHSLRELFLDHNDFKSIPPGIQDMKALHFLRLNNNKIRNIHPEQICNAEEDEDSALEHLHLENNYIRTREISSYAFSCIRLYSSIVLKPQHIK.

Positions 1-19 (MKLAVLFCFILLIVLQTDC) are cleaved as a signal peptide. Residues 96–153 (GYCFVKGMIMYNKAVWSPEPCTTCLCSNGRVLCDETECHPKACPYTIKPEGECCPICS) enclose the VWFC domain. Residues 185 to 270 (SEEDEEIAEG…EEDAIRGDVF (86 aa)) form a disordered region. Residues 192 to 227 (AEGHKEHKKETSVPTKIHGDGERTERKLRPEKEGRS) are compositionally biased toward basic and acidic residues. A compositionally biased stretch (acidic residues) spans 241–263 (ESKEETEREGEEEEEEEEEEEED). A Cell attachment site motif is present at residues 266–268 (RGD). One can recognise an LRRNT domain in the interval 278 to 315 (PGTPRGRPRLPRSCSLSYRTISCVHADFTEIPPITAPE). LRR repeat units lie at residues 339–359 (NLER…GPKA), 365–386 (KLMR…LPST), 387–407 (LEEL…SLSD), 410–430 (QLVT…DPLA), 436–456 (SLSY…GLPA), 457–478 (STEE…CFNH), 481–501 (KITM…APLA), 507–528 (NLES…LPKS), 529–549 (LLHL…VFGH), 553–573 (GLEY…DLVS), 580–601 (SLRE…IQDM), 603–624 (ALHF…QICN), and 632–655 (ALEH…AFSC). N-linked (GlcNAc...) asparagine glycosylation occurs at Asn349. The N-linked (GlcNAc...) asparagine glycan is linked to Asn420. N-linked (GlcNAc...) asparagine glycosylation is present at Asn477.

It belongs to the small leucine-rich proteoglycan (SLRP) family. SLRP class I subfamily. In terms of assembly, interacts with numerous extracellular matrix proteins. Interacts with isoform 1 of MSL1. Interacts with isoform 3 of RASSF1.

It localises to the secreted. Its subcellular location is the extracellular space. The protein resides in the extracellular matrix. Its function is as follows. Promotes matrix assembly and cell adhesiveness. The polypeptide is Extracellular matrix protein 2 (Ecm2) (Mus musculus (Mouse)).